The following is a 92-amino-acid chain: Ezrin (92 aa).

An FERM domain is found at 1–72 (QLFDQVVKGF…PDFVFYAPRR (72 aa)). The residue at position 15 (Lys-15) is an N6-acetyllysine. Residues 42–92 (EIRNISFNDKKFVIKPIDKKAPDFVFYAPRRKPDTIEVQQMKLQDFEQKTK) are interaction with SCYL3.

Interacts with PALS1 and NHERF2. Found in a complex with EZR, PODXL and NHERF2. Interacts with MCC, PLEKHG6, PODXL, SCYL3/PACE1, NHERF1 and TMEM8B. Interacts (when phosphorylated) with FES/FPS. Interacts with dimeric S100P, the interaction may be activating through unmasking of F-actin binding sites. Identified in complexes that contain VIM, EZR, AHNAK, BFSP1, BFSP2, ANK2, PLEC, PRX and spectrin. Detected in a complex composed of at least EZR, AHNAK, PPL and PRX. Interacts with PDPN (via cytoplasmic domain); activates RHOA and promotes epithelial-mesenchymal transition. Interacts with SPN/CD43 cytoplasmic tail, CD44 and ICAM2. Interacts with CLIC5; may work together in a complex which also includes RDX and MYO6 to stabilize linkages between the plasma membrane and subjacent actin cytoskeleton at the base of stereocilia. In terms of processing, phosphorylated by tyrosine-protein kinases. Phosphorylation by ROCK2 suppresses the head-to-tail association of the N-terminal and C-terminal halves resulting in an opened conformation which is capable of actin and membrane-binding. Post-translationally, S-nitrosylation is induced by interferon-gamma and oxidatively-modified low-densitity lipoprotein (LDL(ox)) possibly implicating the iNOS-S100A8/9 transnitrosylase complex.

It is found in the apical cell membrane. Its subcellular location is the cell projection. The protein resides in the microvillus membrane. It localises to the ruffle membrane. The protein localises to the cytoplasm. It is found in the cell cortex. Its subcellular location is the cytoskeleton. The protein resides in the microvillus. With respect to regulation, a head-to-tail association, of the N-terminal and C-terminal halves results in a closed conformation (inactive form) which is incapable of actin or membrane-binding. In terms of biological role, probably involved in connections of major cytoskeletal structures to the plasma membrane. In epithelial cells, required for the formation of microvilli and membrane ruffles on the apical pole. Along with PLEKHG6, required for normal macropinocytosis. This chain is Ezrin, found in Mesocricetus auratus (Golden hamster).